Consider the following 301-residue polypeptide: Probable alpha-L-glutamate ligase (301 aa).

Residues 104–287 (LQLLSRKGIG…IAGLIVAYME (184 aa)) form the ATP-grasp domain. Residues lysine 141, 178–179 (EF), aspartate 187, and 211–213 (RSN) each bind ATP. 3 residues coordinate Mg(2+): aspartate 248, glutamate 260, and asparagine 262. The Mn(2+) site is built by aspartate 248, glutamate 260, and asparagine 262.

The protein belongs to the RimK family. The cofactor is Mg(2+). It depends on Mn(2+) as a cofactor.

The protein is Probable alpha-L-glutamate ligase of Cellvibrio japonicus (strain Ueda107) (Pseudomonas fluorescens subsp. cellulosa).